Here is a 128-residue protein sequence, read N- to C-terminus: Small ribosomal subunit protein uS11 (128 aa).

Belongs to the universal ribosomal protein uS11 family. As to quaternary structure, part of the 30S ribosomal subunit. Interacts with proteins S7 and S18. Binds to IF-3.

Functionally, located on the platform of the 30S subunit, it bridges several disparate RNA helices of the 16S rRNA. Forms part of the Shine-Dalgarno cleft in the 70S ribosome. This Synechococcus sp. (strain JA-2-3B'a(2-13)) (Cyanobacteria bacterium Yellowstone B-Prime) protein is Small ribosomal subunit protein uS11.